Reading from the N-terminus, the 543-residue chain is Putative cysteine ligase BshC (543 aa).

Positions 419–440 (DEKNNDNIDEVVEEVKAQISDI) form a coiled coil.

It belongs to the BshC family.

Its function is as follows. Involved in bacillithiol (BSH) biosynthesis. May catalyze the last step of the pathway, the addition of cysteine to glucosamine malate (GlcN-Mal) to generate BSH. This is Putative cysteine ligase BshC from Oceanobacillus iheyensis (strain DSM 14371 / CIP 107618 / JCM 11309 / KCTC 3954 / HTE831).